The sequence spans 83 residues: RNA-binding protein Hfq (83 aa).

Residues 10-70 (DTFLNQVRKE…ISTVMPLRPI (61 aa)) enclose the Sm domain.

This sequence belongs to the Hfq family. As to quaternary structure, homohexamer.

RNA chaperone that binds small regulatory RNA (sRNAs) and mRNAs to facilitate mRNA translational regulation in response to envelope stress, environmental stress and changes in metabolite concentrations. Also binds with high specificity to tRNAs. The polypeptide is RNA-binding protein Hfq (Desulfitobacterium hafniense (strain DSM 10664 / DCB-2)).